Consider the following 122-residue polypeptide: Ribonuclease pancreatic (122 aa).

Residues Lys-6 and Arg-9 each contribute to the substrate site. Catalysis depends on His-11, which acts as the Proton acceptor. Disulfide bonds link Cys-25–Cys-83, Cys-39–Cys-94, Cys-57–Cys-109, and Cys-64–Cys-71. Substrate is bound by residues 40–44, Lys-65, and Arg-84; that span reads KPVNT. His-117 serves as the catalytic Proton donor.

Belongs to the pancreatic ribonuclease family. As to quaternary structure, monomer. Interacts with and forms tight 1:1 complexes with RNH1. Dimerization of two such complexes may occur. Interaction with RNH1 inhibits this protein. As to expression, pancreas.

Its subcellular location is the secreted. The catalysed reaction is an [RNA] containing cytidine + H2O = an [RNA]-3'-cytidine-3'-phosphate + a 5'-hydroxy-ribonucleotide-3'-[RNA].. The enzyme catalyses an [RNA] containing uridine + H2O = an [RNA]-3'-uridine-3'-phosphate + a 5'-hydroxy-ribonucleotide-3'-[RNA].. In terms of biological role, endonuclease that catalyzes the cleavage of RNA on the 3' side of pyrimidine nucleotides. Acts on single-stranded and double-stranded RNA. In Notamacropus rufogriseus (Red-necked wallaby), this protein is Ribonuclease pancreatic.